Here is a 349-residue protein sequence, read N- to C-terminus: Ribosomal RNA large subunit methyltransferase M (349 aa).

S-adenosyl-L-methionine is bound by residues 216-219 (APGG), Asp-235, Asp-255, and Asp-271. The active-site Proton acceptor is Lys-300.

This sequence belongs to the class I-like SAM-binding methyltransferase superfamily. RNA methyltransferase RlmE family. RlmM subfamily. Monomer.

It is found in the cytoplasm. It catalyses the reaction cytidine(2498) in 23S rRNA + S-adenosyl-L-methionine = 2'-O-methylcytidine(2498) in 23S rRNA + S-adenosyl-L-homocysteine + H(+). Functionally, catalyzes the 2'-O-methylation at nucleotide C2498 in 23S rRNA. The chain is Ribosomal RNA large subunit methyltransferase M from Saccharophagus degradans (strain 2-40 / ATCC 43961 / DSM 17024).